The primary structure comprises 285 residues: Bifunctional protein FolD (285 aa).

Residues 166–168 (GAS), Ser-191, and Ile-232 each bind NADP(+).

Belongs to the tetrahydrofolate dehydrogenase/cyclohydrolase family. As to quaternary structure, homodimer.

It carries out the reaction (6R)-5,10-methylene-5,6,7,8-tetrahydrofolate + NADP(+) = (6R)-5,10-methenyltetrahydrofolate + NADPH. The enzyme catalyses (6R)-5,10-methenyltetrahydrofolate + H2O = (6R)-10-formyltetrahydrofolate + H(+). It functions in the pathway one-carbon metabolism; tetrahydrofolate interconversion. In terms of biological role, catalyzes the oxidation of 5,10-methylenetetrahydrofolate to 5,10-methenyltetrahydrofolate and then the hydrolysis of 5,10-methenyltetrahydrofolate to 10-formyltetrahydrofolate. The protein is Bifunctional protein FolD of Actinobacillus pleuropneumoniae serotype 7 (strain AP76).